A 357-amino-acid chain; its full sequence is Trans-acting factor B (357 aa).

Residues 226-257 are disordered; it reads DDNDLEEEERNASGEQTTTAREESEALDTTSN.

Functionally, plasmid partition require REP1, REP2, and a cis-acting DNA sequence (known as STB). REP1 may act by intercalating in the yeast nuclear matrix and binding STB either directly or via REP2. The sequence is that of Trans-acting factor B (B) from Zygosaccharomyces bailii.